A 176-amino-acid chain; its full sequence is NAD(P)H-quinone oxidoreductase subunit 6, chloroplastic (176 aa).

5 helical membrane passes run 10–30, 32–52, 61–81, 95–115, and 152–172; these read FLLV…VLFP, PIFS…LYIL, AQLL…VMFM, VGDG…ISTI, and FFLP…GAIS.

Belongs to the complex I subunit 6 family. In terms of assembly, NDH is composed of at least 16 different subunits, 5 of which are encoded in the nucleus.

Its subcellular location is the plastid. The protein resides in the chloroplast thylakoid membrane. The enzyme catalyses a plastoquinone + NADH + (n+1) H(+)(in) = a plastoquinol + NAD(+) + n H(+)(out). It carries out the reaction a plastoquinone + NADPH + (n+1) H(+)(in) = a plastoquinol + NADP(+) + n H(+)(out). NDH shuttles electrons from NAD(P)H:plastoquinone, via FMN and iron-sulfur (Fe-S) centers, to quinones in the photosynthetic chain and possibly in a chloroplast respiratory chain. The immediate electron acceptor for the enzyme in this species is believed to be plastoquinone. Couples the redox reaction to proton translocation, and thus conserves the redox energy in a proton gradient. The protein is NAD(P)H-quinone oxidoreductase subunit 6, chloroplastic (ndhG) of Aethionema cordifolium (Lebanon stonecress).